The primary structure comprises 792 residues: Lon protease (792 aa).

Residues 16–211 (DAVVVVPVSN…KVSAFLAQRL (196 aa)) form the Lon N-terminal domain. 361–368 (GPPGVGKT) is an ATP binding site. In terms of domain architecture, Lon proteolytic spans 597–778 (TSVPGVATGL…EDAIEAGLDP (182 aa)). Active-site residues include serine 684 and lysine 727.

It belongs to the peptidase S16 family. In terms of assembly, homohexamer. Organized in a ring with a central cavity.

Its subcellular location is the cytoplasm. The enzyme catalyses Hydrolysis of proteins in presence of ATP.. Functionally, ATP-dependent serine protease that mediates the selective degradation of mutant and abnormal proteins as well as certain short-lived regulatory proteins. Required for cellular homeostasis and for survival from DNA damage and developmental changes induced by stress. Degrades polypeptides processively to yield small peptide fragments that are 5 to 10 amino acids long. Binds to DNA in a double-stranded, site-specific manner. In Phenylobacterium zucineum (strain HLK1), this protein is Lon protease.